Consider the following 160-residue polypeptide: Cytochrome b6-f complex subunit 4 (160 aa).

Helical transmembrane passes span 36 to 56, 95 to 115, and 131 to 151; these read LLYIFPVVILGTFACVIGLSV, LLGVLLMAAVPAGLITVPFIE, and TLFLVGTLVAVWLGIGATLPI.

This sequence belongs to the cytochrome b family. PetD subfamily. As to quaternary structure, the 4 large subunits of the cytochrome b6-f complex are cytochrome b6, subunit IV (17 kDa polypeptide, petD), cytochrome f and the Rieske protein, while the 4 small subunits are petG, petL, petM and petN. The complex functions as a dimer.

The protein localises to the plastid. Its subcellular location is the chloroplast thylakoid membrane. Component of the cytochrome b6-f complex, which mediates electron transfer between photosystem II (PSII) and photosystem I (PSI), cyclic electron flow around PSI, and state transitions. The sequence is that of Cytochrome b6-f complex subunit 4 from Tetradesmus obliquus (Green alga).